We begin with the raw amino-acid sequence, 132 residues long: Small ribosomal subunit protein uS8 (132 aa).

The protein belongs to the universal ribosomal protein uS8 family. In terms of assembly, part of the 30S ribosomal subunit. Contacts proteins S5 and S12.

Functionally, one of the primary rRNA binding proteins, it binds directly to 16S rRNA central domain where it helps coordinate assembly of the platform of the 30S subunit. The protein is Small ribosomal subunit protein uS8 of Rubrobacter xylanophilus (strain DSM 9941 / JCM 11954 / NBRC 16129 / PRD-1).